Consider the following 237-residue polypeptide: Ribosomal RNA small subunit methyltransferase G (237 aa).

Residues Gly78, Phe83, 129–130 (AE), and Arg148 contribute to the S-adenosyl-L-methionine site.

Belongs to the methyltransferase superfamily. RNA methyltransferase RsmG family.

The protein resides in the cytoplasm. Specifically methylates the N7 position of a guanine in 16S rRNA. This is Ribosomal RNA small subunit methyltransferase G from Streptococcus pyogenes serotype M49 (strain NZ131).